The primary structure comprises 668 residues: Ecdysone oxidase (668 aa).

Residues 137-140 (NHMV), Val-270, and 536-537 (WH) contribute to the FAD site. The active-site Proton acceptor is the His-537.

The protein belongs to the GMC oxidoreductase family. Requires FAD as cofactor.

The enzyme catalyses ecdysone + O2 = 3-dehydroecdysone + H2O2. Involved in the inactivation of ecdysteroid molting hormones by converting ecdysteroids into 3-dehydroecdysteroids. The protein is Ecdysone oxidase of Bombyx mori (Silk moth).